We begin with the raw amino-acid sequence, 343 residues long: S-adenosylmethionine:tRNA ribosyltransferase-isomerase (343 aa).

The protein belongs to the QueA family. Monomer.

The protein resides in the cytoplasm. It catalyses the reaction 7-aminomethyl-7-carbaguanosine(34) in tRNA + S-adenosyl-L-methionine = epoxyqueuosine(34) in tRNA + adenine + L-methionine + 2 H(+). It participates in tRNA modification; tRNA-queuosine biosynthesis. Its function is as follows. Transfers and isomerizes the ribose moiety from AdoMet to the 7-aminomethyl group of 7-deazaguanine (preQ1-tRNA) to give epoxyqueuosine (oQ-tRNA). This chain is S-adenosylmethionine:tRNA ribosyltransferase-isomerase, found in Enterococcus faecalis (strain ATCC 700802 / V583).